Reading from the N-terminus, the 455-residue chain is Venom prothrombin activator notecarin-D1 (455 aa).

A signal peptide spans 1 to 20; the sequence is MAPQLLLCLILTFLWSLPEA. The propeptide occupies 21 to 40; sequence ESNVFLKSKVANRFLQRTKR. Residues 41–86 form the Gla domain; sequence SNSLFEEIRPGNIERECIEEKCSKEEAREVFEDNEKTETFWNVYVD. Residues Glu46, Glu47, Glu54, Glu56, Glu59, Glu60, Glu65, Glu66, Glu69, Glu72, and Glu75 each carry the 4-carboxyglutamate modification. Cys57 and Cys62 are joined by a disulfide. The region spanning 86-122 is the EGF-like 1; calcium-binding domain; the sequence is DGDQCSSNPCHYRGTCKDGIGSYTCTCLPNYEGKNCE. Intrachain disulfides connect Cys90–Cys101, Cys95–Cys110, Cys112–Cys121, Cys129–Cys140, Cys136–Cys149, Cys151–Cys164, Cys172–Cys328, Cys216–Cys221, Cys236–Cys252, Cys376–Cys390, and Cys401–Cys429. The O-linked (Hex...) serine glycan is linked to Ser92. Residues 129–164 enclose the EGF-like 2 domain; it reads CRVDNGNCWHFCKRVQSETQCSCAESYRLGVDGHSC. A propeptide spans 182 to 209 (activation peptide); that stretch reads REASLPDFVQSQKATLLKKSDNPSPDIR. The 244-residue stretch at 210–453 folds into the Peptidase S1 domain; sequence IVNGMDCKLG…FIPWIKKIMS (244 aa). The active-site Charge relay system is the His251. The N-linked (GlcNAc...) asparagine glycan is linked to Asn254. Asp308 (charge relay system) is an active-site residue. The Charge relay system role is filled by Ser405.

Belongs to the peptidase S1 family. Snake venom subfamily. In terms of assembly, heterodimer of a light chain and a heavy chain; disulfide-linked. Gamma-carboxyglutamate residues are formed by vitamin K dependent carboxylation. These residues are essential for the binding of calcium. As to expression, expressed by the venom gland.

The protein resides in the secreted. The catalysed reaction is Selective cleavage of Arg-|-Thr and then Arg-|-Ile bonds in prothrombin to form thrombin.. Its function is as follows. Snake prothrombin activator that attacks the hemostatic system of prey. This protein is functionally similar to blood coagulation factor Xa. The polypeptide is Venom prothrombin activator notecarin-D1 (Notechis scutatus scutatus (Mainland tiger snake)).